The chain runs to 938 residues: Probable glutamyl endopeptidase, chloroplastic (938 aa).

A chloroplast-targeting transit peptide spans 1–54 (MSSLTILLQRACLRFALLPVPPLRAPLRPPRRPLGLPRRSAMSSSAASRLSHIV). Over residues 58 to 76 (GGAAGESSEPPAAAAAASG) the composition is skewed to low complexity. The tract at residues 58–77 (GGAAGESSEPPAAAAAASGL) is disordered. Active-site charge relay system residues include Ser762, Asp836, and His870. The segment covering 897 to 913 (SSKTDSDSVADTENKTV) has biased composition (polar residues). A disordered region spans residues 897–938 (SSKTDSDSVADTENKTVSASGGGAPCEGPEAEGFSSMQRSLL).

This sequence belongs to the peptidase S9D family.

It is found in the plastid. The protein localises to the chloroplast stroma. Serine-type protease active in vitro against the LHCII N-terminal. Cleaves its substrate on the carboxy-side of Glu residues. The sequence is that of Probable glutamyl endopeptidase, chloroplastic (GEP) from Oryza sativa subsp. japonica (Rice).